Reading from the N-terminus, the 473-residue chain is MAP kinase-activated protein kinase 5 (473 aa).

Residues 22-304 (INWTQKLGAG…IEGVLDHPWL (283 aa)) form the Protein kinase domain. ATP is bound by residues 28–36 (LGAGISGPV) and K51. S115 is subject to Phosphoserine; by PKA. D148 acts as the Proton acceptor in catalysis. T182 bears the Phosphothreonine; by MAPK11, MAPK14, MAPK4, MAPK6 and PKA mark. Phosphoserine is present on residues S212 and S354. Residues 409–440 (ENEDEKLNEVMQEAWKYNRECKLLRDTLQSFS) adopt a coiled-coil conformation.

This sequence belongs to the protein kinase superfamily. CAMK Ser/Thr protein kinase family. As to quaternary structure, interacts with ERK3/MAPK6 and ERK4/MAPK4 (via FRIEDE motif); the interaction is direct. Interacts with YWHAE; the interaction prevents phosphorylation of HSP27/HSPB1 leading to disrupt F-actin polymerization. Interacts with SQSTM1. In terms of processing, phosphorylated on Thr-182 ERK3/MAPK6 or ERK4/MAPK4; which is the regulatory phosphorylation site and is located on the T-loop/loop 12, leading to activation. Phosphorylation at Thr-182 by p38-alpha/MAPK14, p38-beta/MAPK11 is subject to debate. Phosphorylated at Ser-115 by PKA/PRKACA, leading to localization to the cytoplasm. Autophosphorylated. In terms of tissue distribution, expressed ubiquitously.

It is found in the cytoplasm. The protein localises to the nucleus. The enzyme catalyses L-seryl-[protein] + ATP = O-phospho-L-seryl-[protein] + ADP + H(+). It catalyses the reaction L-threonyl-[protein] + ATP = O-phospho-L-threonyl-[protein] + ADP + H(+). With respect to regulation, activated following phosphorylation at Thr-182 by p38-alpha/MAPK14, p38-beta/MAPK11, ERK2/MAPK1, ERK3/MAPK6, and ERK4/MAPK4. Activated by stress-related extracellular stimuli; such as H(2)O(2), arsenite, anisomycin TNF alpha and also PMA and the calcium ionophore A23187; but to a lesser extent. In vitro, activated by SQSTM1. Inhibited by diterpenoid alkaloid noroxoaconitine. Tumor suppressor serine/threonine-protein kinase involved in mTORC1 signaling and post-transcriptional regulation. Phosphorylates FOXO3, ERK3/MAPK6, ERK4/MAPK4, HSP27/HSPB1, p53/TP53 and RHEB. Acts as a tumor suppressor by mediating Ras-induced senescence and phosphorylating p53/TP53. Involved in post-transcriptional regulation of MYC by mediating phosphorylation of FOXO3: phosphorylation of FOXO3 leads to promote nuclear localization of FOXO3, enabling expression of miR-34b and miR-34c, 2 post-transcriptional regulators of MYC that bind to the 3'UTR of MYC transcript and prevent MYC translation. Acts as a negative regulator of mTORC1 signaling by mediating phosphorylation and inhibition of RHEB. Part of the atypical MAPK signaling via its interaction with ERK3/MAPK6 or ERK4/MAPK4: the precise role of the complex formed with ERK3/MAPK6 or ERK4/MAPK4 is still unclear, but the complex follows a complex set of phosphorylation events: upon interaction with atypical MAPK (ERK3/MAPK6 or ERK4/MAPK4), ERK3/MAPK6 (or ERK4/MAPK4) is phosphorylated and then mediates phosphorylation and activation of MAPKAPK5, which in turn phosphorylates ERK3/MAPK6 (or ERK4/MAPK4). Mediates phosphorylation of HSP27/HSPB1 in response to PKA/PRKACA stimulation, inducing F-actin rearrangement. The polypeptide is MAP kinase-activated protein kinase 5 (MAPKAPK5) (Homo sapiens (Human)).